We begin with the raw amino-acid sequence, 334 residues long: Protein FAM50B (334 aa).

Ala-2 carries the post-translational modification N-acetylalanine. The segment at 122 to 175 is disordered; sequence FTLDEEEGDQEDSRQAESAEAHSAGAKKNLGKNPDVDTSFLPDREREEEENRLR. Composition is skewed to basic and acidic residues over residues 132-141 and 163-175; these read EDSRQAESAE and PDRE…NRLR.

Belongs to the FAM50 family. In terms of tissue distribution, widely expressed. Abundant in testis, where it is expressed in seminiferous tubules, not in the interstitium. At the cellular level, expressed in primary spermatocytes and round spermatids, but not detectable in spermatogonia, elongating spermatids, mature spermatozoa, Sertoli cells or Leydig cells.

The chain is Protein FAM50B (Fam50b) from Mus musculus (Mouse).